A 451-amino-acid polypeptide reads, in one-letter code: Phosphoglucosamine mutase (451 aa).

Residue Ser102 is the Phosphoserine intermediate of the active site. Positions 102, 242, 244, and 246 each coordinate Mg(2+). Ser102 carries the phosphoserine modification.

The protein belongs to the phosphohexose mutase family. It depends on Mg(2+) as a cofactor. In terms of processing, activated by phosphorylation.

The enzyme catalyses alpha-D-glucosamine 1-phosphate = D-glucosamine 6-phosphate. Catalyzes the conversion of glucosamine-6-phosphate to glucosamine-1-phosphate. The polypeptide is Phosphoglucosamine mutase (Staphylococcus saprophyticus subsp. saprophyticus (strain ATCC 15305 / DSM 20229 / NCIMB 8711 / NCTC 7292 / S-41)).